The sequence spans 633 residues: Chaperone protein DnaK (633 aa).

Thr-198 is modified (phosphothreonine; by autocatalysis). The tract at residues 599–633 (QQASQETPGDGDAGAAGAKKKDDDDVVDADYEEVK) is disordered. Acidic residues predominate over residues 622–633 (DDVVDADYEEVK).

Belongs to the heat shock protein 70 family.

In terms of biological role, acts as a chaperone. In Desulfotalea psychrophila (strain LSv54 / DSM 12343), this protein is Chaperone protein DnaK.